The sequence spans 1230 residues: Cullin-associated NEDD8-dissociated protein 1 (1230 aa).

N-acetylalanine is present on A2. HEAT repeat units follow at residues 2 to 39 (ASASYHISNLLEKMTSSDKDFRFMATNDLMTELQKDSI), 44 to 81 (DSERKVVKMILRLLEDKNGEVQNLAVKCLGPLVSKVKE), 83 to 119 (QVETIVDTLCTNMLSDKEQLRDISSIGLKTVIGELPP), 131 to 165 (CKKITGRLTSAIAKQEDVSVQLEALDIMADMLSRQ), 171 to 208 (NFHPSILTCLLPQLTSPRLAVRKRTIIALGHLVMSCGN), 210 to 247 (VFVDLIEHLLSELSKNDSMSTTRTYIQCIAAISRQAGH), 248 to 282 (RIGEYLEKIIPLVVKFCNVDDDELREYCIQAFESF), 289 to 366 (EVYP…TRHE), 370 to 407 (EFYKTVSPALIARFKEREENVKADVFHAYLSLLKQTRP), 424 to 467 (PLTM…VLPG), 471 to 510 (QHIPVLVPGIIFSLNDKSSSSNLKIDALSCLYVILCNHSP), and 515 to 552 (PHVQALVPPVVACVGDPFYKITSEALLVTQQLVKVIRP). The segment at 315–344 (DEDEDENAMDADGGDDDDQGSDDEYSDDDD) is disordered. Position 335 is a phosphoserine (S335). Phosphoserine is present on S558. 15 HEAT repeats span residues 563-602 (PYIKDLFTCTIKRLKAADIDQEVKERAISCMGQIICNLGD), 606-643 (PDLSNTLQIFLERLKNEITRLTTVKALTLIAGSPLKID), 646-683 (PVLGEGVPILASFLRKNQRALKLGTLSALDILIKNYSD), 688-725 (AMIDAVLDELPPLISESDMHVSQMAISFLTTLAKVYPS), 729-768 (KISGSILNELIGLVRSPLLQGGALSAMLDFFQALVVTGTN), 770-808 (LGYMDLLRMLTGPVYSQSTALTHKQSYYSIAKCVAALTR), 809-845 (ACPKEGPAVVGQFIQDVKNSRSTDSIRLLALLSLGEV), 852-889 (SGQLELKSVILEAFSSPSEEVKSAASYALGSISVGNLP), 890-927 (EYLPFVLQEITSQPKRQYLLLHSLKEIISSASVAGLKP), 928-960 (YVENIWALLLKHCECAEEGTRNVVAECLGKLTL), 961-998 (IDPETLLPRLKGYLISGSSYARSSVVTAVKFTISDHPQ), 1002-1039 (PLLKNCIGDFLKTLEDPDLNVRRVALVTFNSAAHNKPS), 1043-1097 (DLLD…DSCL), 1099-1133 (RLDIFEFLNHVEDGLKDHYDIKMLTFLMLVRLSTL), and 1140-1189 (QRLD…IPEA). The residue at position 971 (K971) is an N6-acetyllysine.

This sequence belongs to the CAND family. As to quaternary structure, interacts with TBP. Part of a complex that contains CUL1 and RBX1. Interacts with unneddylated cullins: interacts with CUL1, CUL2, CUL3, CUL4A, CUL4B and CUL5. Does not bind neddylated CUL1. Interaction with cullins is abolished in presence of COMMD1, which antagonizes with CAND1 for interacting with cullins. Interacts with ERCC6. Interacts with DCUN1D1, DCUN1D2, DCUN1D3, DCUN1D4 and DCUN1D5; these interactions are bridged by cullins and strongly inhibits the neddylation of cullins.

The protein localises to the cytoplasm. The protein resides in the nucleus. Key assembly factor of SCF (SKP1-CUL1-F-box protein) E3 ubiquitin ligase complexes that promotes the exchange of the substrate-recognition F-box subunit in SCF complexes, thereby playing a key role in the cellular repertoire of SCF complexes. Acts as a F-box protein exchange factor. The exchange activity of CAND1 is coupled with cycles of neddylation conjugation: in the deneddylated state, cullin-binding CAND1 binds CUL1-RBX1, increasing dissociation of the SCF complex and promoting exchange of the F-box protein. Probably plays a similar role in other cullin-RING E3 ubiquitin ligase complexes. This chain is Cullin-associated NEDD8-dissociated protein 1 (Cand1), found in Mus musculus (Mouse).